A 628-amino-acid chain; its full sequence is Kelch-like protein diablo (628 aa).

The segment at 1-56 is disordered; that stretch reads MGDLPGSTGGGSGPAAAGNASGNSSSAGNTGLGVAGTTGVDRPPSPARLSHTSEKH. Positions 14-29 are enriched in low complexity; it reads PAAAGNASGNSSSAGN. The region spanning 74–141 is the BTB domain; it reads CDVVLNVGGR…CYTAHIIVEE (68 aa). Positions 176–278 constitute a BACK domain; sequence CLGIRAFADT…SPKFLVGTVG (103 aa). 6 Kelch repeats span residues 325–371, 373–419, 420–466, 468–513, 515–560, and 561–607; these read VLFA…VLND, LYAV…VLDG, FLYA…VLGG, LYAI…VFNN, IYAV…VVNG, and QLYA…VMRA.

It functions in the pathway protein modification; protein ubiquitination. Its function is as follows. Probable substrate-specific adapter of an E3 ubiquitin-protein ligase complex which mediates the ubiquitination and subsequent proteasomal degradation of target proteins. May have a role in synapse differentiation and growth. This chain is Kelch-like protein diablo, found in Drosophila persimilis (Fruit fly).